Here is a 284-residue protein sequence, read N- to C-terminus: Putative ribosome biogenesis protein C306.07c (284 aa).

The segment at 264-284 is disordered; it reads LKKSELRAQKRGSSGEGKGNK.

It belongs to the universal ribosomal protein uL1 family. Highly divergent. As to quaternary structure, component of the 90S pre-ribosomes.

Its subcellular location is the nucleus. It localises to the nucleolus. In terms of biological role, involved in rRNA-processing and ribosome biosynthesis. This Schizosaccharomyces pombe (strain 972 / ATCC 24843) (Fission yeast) protein is Putative ribosome biogenesis protein C306.07c.